The chain runs to 166 residues: Lipoprotein signal peptidase (166 aa).

Helical transmembrane passes span 9-29, 45-65, 71-91, and 100-120; these read ASGA…FDQL, ALTS…FGFL, WQRW…CFLL, and FSLS…DRLV. Residues Asp-126 and Asp-144 contribute to the active site. A helical membrane pass occupies residues 135–155; it reads WHFPAFNLADSAITIGAVLLV.

Belongs to the peptidase A8 family.

The protein localises to the cell inner membrane. It catalyses the reaction Release of signal peptides from bacterial membrane prolipoproteins. Hydrolyzes -Xaa-Yaa-Zaa-|-(S,diacylglyceryl)Cys-, in which Xaa is hydrophobic (preferably Leu), and Yaa (Ala or Ser) and Zaa (Gly or Ala) have small, neutral side chains.. It functions in the pathway protein modification; lipoprotein biosynthesis (signal peptide cleavage). This protein specifically catalyzes the removal of signal peptides from prolipoproteins. The polypeptide is Lipoprotein signal peptidase (Burkholderia ambifaria (strain ATCC BAA-244 / DSM 16087 / CCUG 44356 / LMG 19182 / AMMD) (Burkholderia cepacia (strain AMMD))).